The primary structure comprises 318 residues: Malonyl-S-ACP:biotin-protein carboxyltransferase MADC (318 aa).

In terms of domain architecture, CoA carboxyltransferase N-terminal spans 2 to 257 (AKWTELQDKS…VLQKPMEEIE (256 aa)).

Its subcellular location is the cytoplasm. It carries out the reaction N(6)-biotinyl-L-lysyl-[protein] + malonyl-[ACP] = N(6)-carboxybiotinyl-L-lysyl-[protein] + acetyl-[ACP]. Gamma subunit of the biotin-dependent malonate decarboxylase multienzyme complex (EC 7.2.4.4). The two subunits MADC and MADD are required for the transfer of the malonate carboxy group from the acyl-carrier protein (ACP) to the prosthetic group of the biotin carrier MADF. Required for the regeneration of ACP. This Malonomonas rubra protein is Malonyl-S-ACP:biotin-protein carboxyltransferase MADC (madC).